Consider the following 250-residue polypeptide: Glycerol-1-phosphate phosphohydrolase 2 (250 aa).

The active-site Nucleophile is aspartate 18. Mg(2+) is bound by residues aspartate 18 and aspartate 20. Residue aspartate 20 is the Proton donor of the active site. Residue lysine 64 forms a Glycyl lysine isopeptide (Lys-Gly) (interchain with G-Cter in ubiquitin) linkage. The residue at position 90 (serine 90) is a Phosphoserine. Residue lysine 144 forms a Glycyl lysine isopeptide (Lys-Gly) (interchain with G-Cter in ubiquitin) linkage. Aspartate 179 lines the Mg(2+) pocket.

Belongs to the HAD-like hydrolase superfamily. DOG/GPP family. Monomer. Mg(2+) is required as a cofactor.

It localises to the cytoplasm. The protein localises to the nucleus. The enzyme catalyses sn-glycerol 1-phosphate + H2O = glycerol + phosphate. It carries out the reaction sn-glycerol 3-phosphate + H2O = glycerol + phosphate. Glycerol-1-phosphate phosphohydrolase involved in glycerol biosynthesis. Plays a role in osmoadaptation. This Saccharomyces cerevisiae (strain ATCC 204508 / S288c) (Baker's yeast) protein is Glycerol-1-phosphate phosphohydrolase 2.